Here is a 142-residue protein sequence, read N- to C-terminus: Hemoglobin subunit beta-C (142 aa).

The region spanning Met1–His142 is the Globin domain. Heme b is bound by residues His59 and His88.

This sequence belongs to the globin family. As to quaternary structure, heterotetramer of two alpha chains and two beta chains. In terms of tissue distribution, red blood cells.

Functionally, involved in oxygen transport from the lung to the various peripheral tissues. This is Hemoglobin subunit beta-C (HBBC) from Capra hircus (Goat).